Reading from the N-terminus, the 156-residue chain is MNATRKQRLWLVIGVLAAAALAVTLIVFALQRNMSYLFTPSQVRAGEAAGYQQFRLGGMVKAGSIQRAGDSLKVSFIVIDKNAATQVEYTGILPDLFRDNQSVIANGRMQGGRFVANEVLAKHDETYMPKELKDAMAQGHLGKPVPATVAPLTAPR.

Residues 1 to 8 (MNATRKQR) are Cytoplasmic-facing. Residues 9–29 (LWLVIGVLAAAALAVTLIVFA) traverse the membrane as a helical; Signal-anchor for type II membrane protein segment. Residues 30–156 (LQRNMSYLFT…ATVAPLTAPR (127 aa)) lie on the Periplasmic side of the membrane. Positions 123 and 127 each coordinate heme.

This sequence belongs to the CcmE/CycJ family.

The protein resides in the cell inner membrane. Heme chaperone required for the biogenesis of c-type cytochromes. Transiently binds heme delivered by CcmC and transfers the heme to apo-cytochromes in a process facilitated by CcmF and CcmH. This is Cytochrome c-type biogenesis protein CcmE 1 from Xanthomonas axonopodis pv. citri (strain 306).